Reading from the N-terminus, the 788-residue chain is Protein translocase subunit SecA 2 (788 aa).

ATP-binding positions include glutamine 86, 104–108 (GEGKT), and aspartate 493.

It belongs to the SecA family. In terms of assembly, monomer and homodimer. Part of the essential Sec protein translocation apparatus which comprises SecA, SecYEG and auxiliary proteins SecDF. Other proteins may also be involved.

The protein resides in the cell membrane. It is found in the cytoplasm. It catalyses the reaction ATP + H2O + cellular proteinSide 1 = ADP + phosphate + cellular proteinSide 2.. In terms of biological role, part of the Sec protein translocase complex. Interacts with the SecYEG preprotein conducting channel. Has a central role in coupling the hydrolysis of ATP to the transfer of proteins into and across the cell membrane, serving as an ATP-driven molecular motor driving the stepwise translocation of polypeptide chains across the membrane. This chain is Protein translocase subunit SecA 2, found in Geobacillus thermodenitrificans (strain NG80-2).